Here is a 192-residue protein sequence, read N- to C-terminus: Probable nicotinate-nucleotide adenylyltransferase (192 aa).

Belongs to the NadD family.

The catalysed reaction is nicotinate beta-D-ribonucleotide + ATP + H(+) = deamido-NAD(+) + diphosphate. The protein operates within cofactor biosynthesis; NAD(+) biosynthesis; deamido-NAD(+) from nicotinate D-ribonucleotide: step 1/1. Functionally, catalyzes the reversible adenylation of nicotinate mononucleotide (NaMN) to nicotinic acid adenine dinucleotide (NaAD). The sequence is that of Probable nicotinate-nucleotide adenylyltransferase from Cytophaga hutchinsonii (strain ATCC 33406 / DSM 1761 / CIP 103989 / NBRC 15051 / NCIMB 9469 / D465).